The primary structure comprises 528 residues: ATP synthase subunit beta 2 (528 aa).

The segment covering 1 to 10 (MADPQATNGT) has biased composition (polar residues). The tract at residues 1–27 (MADPQATNGTGAACAERDASDVGDARD) is disordered. The segment covering 15–27 (AERDASDVGDARD) has biased composition (basic and acidic residues). Residue 179–186 (GGAGVGKT) coordinates ATP. Basic and acidic residues predominate over residues 488 to 499 (AAAREADARREA). Positions 488 to 528 (AAAREADARREAAAAASGAGPGTTSDPASGSAEPQGARHGR) are disordered.

Belongs to the ATPase alpha/beta chains family. F-type ATPases have 2 components, CF(1) - the catalytic core - and CF(0) - the membrane proton channel. CF(1) has five subunits: alpha(3), beta(3), gamma(1), delta(1), epsilon(1). CF(0) has three main subunits: a(1), b(2) and c(9-12). The alpha and beta chains form an alternating ring which encloses part of the gamma chain. CF(1) is attached to CF(0) by a central stalk formed by the gamma and epsilon chains, while a peripheral stalk is formed by the delta and b chains.

The protein resides in the cell inner membrane. The catalysed reaction is ATP + H2O + 4 H(+)(in) = ADP + phosphate + 5 H(+)(out). Its function is as follows. Produces ATP from ADP in the presence of a proton gradient across the membrane. The catalytic sites are hosted primarily by the beta subunits. This Burkholderia pseudomallei (strain 1106a) protein is ATP synthase subunit beta 2.